Consider the following 156-residue polypeptide: Small ribosomal subunit protein uS7 (156 aa).

It belongs to the universal ribosomal protein uS7 family. Part of the 30S ribosomal subunit. Contacts proteins S9 and S11.

In terms of biological role, one of the primary rRNA binding proteins, it binds directly to 16S rRNA where it nucleates assembly of the head domain of the 30S subunit. Is located at the subunit interface close to the decoding center, probably blocks exit of the E-site tRNA. In Brucella melitensis biotype 1 (strain ATCC 23456 / CCUG 17765 / NCTC 10094 / 16M), this protein is Small ribosomal subunit protein uS7.